The sequence spans 230 residues: Urease accessory protein UreF (230 aa).

This sequence belongs to the UreF family. UreD, UreF and UreG form a complex that acts as a GTP-hydrolysis-dependent molecular chaperone, activating the urease apoprotein by helping to assemble the nickel containing metallocenter of UreC. The UreE protein probably delivers the nickel.

The protein resides in the cytoplasm. Its function is as follows. Required for maturation of urease via the functional incorporation of the urease nickel metallocenter. This is Urease accessory protein UreF from Cupriavidus metallidurans (strain ATCC 43123 / DSM 2839 / NBRC 102507 / CH34) (Ralstonia metallidurans).